The following is a 279-amino-acid chain: NAD kinase (279 aa).

Residue Asp63 is the Proton acceptor of the active site. NAD(+) contacts are provided by residues 63–64 (DG), Arg68, 133–134 (NE), and Asp163.

Belongs to the NAD kinase family. A divalent metal cation is required as a cofactor.

Its subcellular location is the cytoplasm. The catalysed reaction is NAD(+) + ATP = ADP + NADP(+) + H(+). Involved in the regulation of the intracellular balance of NAD and NADP, and is a key enzyme in the biosynthesis of NADP. Catalyzes specifically the phosphorylation on 2'-hydroxyl of the adenosine moiety of NAD to yield NADP. The protein is NAD kinase of Protochlamydia amoebophila (strain UWE25).